We begin with the raw amino-acid sequence, 476 residues long: Proline dehydrogenase 2, mitochondrial (476 aa).

The N-terminal 29 residues, 1 to 29, are a transit peptide targeting the mitochondrion; it reads MANRFLRPNLIHRFSTVSPVGPPTTIIPE.

The protein belongs to the proline oxidase family. It depends on FAD as a cofactor. Expressed in the vascular tissue and in the abscission zone of petals, sepals, stamina, pistils and siliques. Not detected in petioles.

The protein localises to the mitochondrion. The catalysed reaction is L-proline + a quinone = (S)-1-pyrroline-5-carboxylate + a quinol + H(+). Its pathway is amino-acid degradation; L-proline degradation into L-glutamate; L-glutamate from L-proline: step 1/2. Converts proline to delta-1-pyrroline-5-carboxylate. In Arabidopsis thaliana (Mouse-ear cress), this protein is Proline dehydrogenase 2, mitochondrial (POX2).